Here is a 350-residue protein sequence, read N- to C-terminus: UDP-3-O-acylglucosamine N-acyltransferase (350 aa).

The Proton acceptor role is filled by His244.

The protein belongs to the transferase hexapeptide repeat family. LpxD subfamily. As to quaternary structure, homotrimer.

It catalyses the reaction a UDP-3-O-[(3R)-3-hydroxyacyl]-alpha-D-glucosamine + a (3R)-hydroxyacyl-[ACP] = a UDP-2-N,3-O-bis[(3R)-3-hydroxyacyl]-alpha-D-glucosamine + holo-[ACP] + H(+). Its pathway is bacterial outer membrane biogenesis; LPS lipid A biosynthesis. Its function is as follows. Catalyzes the N-acylation of UDP-3-O-acylglucosamine using 3-hydroxyacyl-ACP as the acyl donor. Is involved in the biosynthesis of lipid A, a phosphorylated glycolipid that anchors the lipopolysaccharide to the outer membrane of the cell. This chain is UDP-3-O-acylglucosamine N-acyltransferase, found in Herminiimonas arsenicoxydans.